A 1407-amino-acid chain; its full sequence is MKGLLDLFKQFTPDEHFDAIKIGLASPEKIRSWSFGEVKKPETINYRTFKPERDGLFCAKIFGPIKDYECLCGKYKRLKHRGVICEKCGVEVTQTKVRRDRMGHIDLAAPCAHIWFLKSLPSRLGLVLDMTLRDIERVLYFEAYVVTDPGMTPLKKFSIMTEDDYDTKKREFGDEFVALMGAEGIKQLLQEMDLDTEIDKLRNDMTGSELKVKKNSKRLKVMEAFKKSGIKPNWMVMDVLPVLPPDLRPLVPLDGGRFATSDLNDLYRRVINRNNRLARLLELKAPEIIVRNEKRMLQEAVDSLLDNGRRGKAMTGANKRALKSLADMIKGKSGRFRQNLLGKRVDYSGRSVITVGPYLKLHQCGLPKLMALELFKPFIFSRLEAMGIASTIKQAKKEVESGTPVVWDILEEVIKEHPVMLNRAPTLHRLGIQAFEPVLIEGKAIQLHPLVCSAFNADFDGDQMAVHVPLSIEAQMEARTLMLASNNVLFPASGEPSIVPSQDVVLGLYYATRERTNGLGEGMIFSDVVEVQRALDNKVVEITARISVRLTEWLRPEDGSDNFEPHTSLIHTTVGRALLSEILPKGLPFSVMNKALKKKEISRLINTAFRKCGLKATVVFADKLLQSGFRLATRAGISIAIDDMLVPKQKQMLIERAENEVKEIEQQYVSGLVTAGERYNKVVDIWGKTGDEVGKVMMSQLSKQKVIDRNGKEVDQESFNSIYMMADSGARGSAAQIRQLAGMRGLMAKPDGSIIETPITANFREGLNVLQYFISTHGARKGLADTALKTANSGYLTRRLVDVTQDLVVIEDDCGTDNGMAMRALVEGGEVIESLRDRILGRVTAIDVTHPETQEVLVLAGKMLDEDTMEVLEAAGVDEVKVRTSLTCDTRFGICAKCYGRDLGRGGLVNQGEAVGVIAAQSIGEPGTQLTMRTFHIGGAASRAAVASSVDAKSDGIIGFNSTMRYVTNAKGELVVISRSGEIIITDPHGRERERHKVPYGAILNVKPDQTLKAGTILGNWDPLTRPIITEFAGHTRFENVEEGVTVAKQVDEVTGLSTLVVIDPKRRGSAKVVRPQVKLLDVNGQEVKIPGTDHSVTIGFPIGALIQVRDGQDVMPGEVLARIPVEGQKTRDITGGLPRVAELFEARTPKDKGILAEVTGTVSFGKETKGKVRLQITDPEGKVYEELVPKEKNIVVHEGQVVNKGESIIDGPADPQDILRLLGVEELARYIVDEVQDVYRLQGVKINDKHIEVIVRQMLRRVQITNPGDSHYILGEQVERSELFGTNDKLRAQDKLPATYSDVLLGITKASLSTDSFISAASFQETTRVLTEAAIMGKRDELRGLKENVIVGRLIPAGTGMAYHQARKAKDELDDNERRLIAMQEAQEALAAVDADMADSAGNAAE.

Residues Cys-70, Cys-72, Cys-85, and Cys-88 each contribute to the Zn(2+) site. Mg(2+)-binding residues include Asp-458, Asp-460, and Asp-462. Cys-814, Cys-888, Cys-895, and Cys-898 together coordinate Zn(2+).

It belongs to the RNA polymerase beta' chain family. In terms of assembly, the RNAP catalytic core consists of 2 alpha, 1 beta, 1 beta' and 1 omega subunit. When a sigma factor is associated with the core the holoenzyme is formed, which can initiate transcription. Mg(2+) serves as cofactor. The cofactor is Zn(2+).

The catalysed reaction is RNA(n) + a ribonucleoside 5'-triphosphate = RNA(n+1) + diphosphate. Functionally, DNA-dependent RNA polymerase catalyzes the transcription of DNA into RNA using the four ribonucleoside triphosphates as substrates. The protein is DNA-directed RNA polymerase subunit beta' of Leptothrix cholodnii (strain ATCC 51168 / LMG 8142 / SP-6) (Leptothrix discophora (strain SP-6)).